A 319-amino-acid chain; its full sequence is Coproporphyrin III ferrochelatase 2 (319 aa).

Residues tyrosine 13, arginine 30, 46 to 47 (RY), serine 54, and tyrosine 125 each bind Fe-coproporphyrin III. 2 residues coordinate Fe(2+): histidine 181 and glutamate 262.

It belongs to the ferrochelatase family.

The protein localises to the cytoplasm. It catalyses the reaction Fe-coproporphyrin III + 2 H(+) = coproporphyrin III + Fe(2+). It functions in the pathway porphyrin-containing compound metabolism; protoheme biosynthesis. Functionally, involved in coproporphyrin-dependent heme b biosynthesis. Catalyzes the insertion of ferrous iron into coproporphyrin III to form Fe-coproporphyrin III. The chain is Coproporphyrin III ferrochelatase 2 from Bacillus anthracis.